The chain runs to 123 residues: Protein HesB, vegetative (123 aa).

The protein belongs to the HesB/IscA family.

Its function is as follows. May be required for efficient nitrogen fixation. The sequence is that of Protein HesB, vegetative (hesB2) from Trichormus variabilis (strain ATCC 29413 / PCC 7937) (Anabaena variabilis).